A 162-amino-acid chain; its full sequence is Protein-export protein SecB (162 aa).

Belongs to the SecB family. In terms of assembly, homotetramer, a dimer of dimers. One homotetramer interacts with 1 SecA dimer.

Its subcellular location is the cytoplasm. In terms of biological role, one of the proteins required for the normal export of preproteins out of the cell cytoplasm. It is a molecular chaperone that binds to a subset of precursor proteins, maintaining them in a translocation-competent state. It also specifically binds to its receptor SecA. The protein is Protein-export protein SecB of Legionella pneumophila subsp. pneumophila (strain Philadelphia 1 / ATCC 33152 / DSM 7513).